A 216-amino-acid polypeptide reads, in one-letter code: Redox-sensing transcriptional repressor Rex (216 aa).

Residues 17 to 56 (IYFRYLTFLHDAGTDRISSAELSDAIKFDAATIRRDFSYF) constitute a DNA-binding region (H-T-H motif). 91–96 (GAGNLG) is an NAD(+) binding site.

The protein belongs to the transcriptional regulatory Rex family. In terms of assembly, homodimer.

Its subcellular location is the cytoplasm. Modulates transcription in response to changes in cellular NADH/NAD(+) redox state. This chain is Redox-sensing transcriptional repressor Rex, found in Leuconostoc citreum (strain KM20).